Consider the following 218-residue polypeptide: Envelope glycoprotein L (218 aa).

An interaction with gH region spans residues 57–185; it reads KLVKATRLDF…LGPPPLGCFT (129 aa). Residues 60–218 enclose the gL alphaherpesvirus-type domain; that stretch reads KATRLDFTWG…ASYYANLQKT (159 aa). Intrachain disulfides connect Cys-81–Cys-113 and Cys-183–Cys-206.

This sequence belongs to the herpesviridae glycoprotein L (gL) family. Alphaherpesvirinae gL subfamily. In terms of assembly, interacts with glycoprotein H (gH); this interaction is necessary for the correct processing and cell surface expression of gH. The heterodimer gH/gL seems to interact with gB trimers during fusion.

Its subcellular location is the virion membrane. It is found in the host cell membrane. It localises to the host Golgi apparatus. The protein localises to the host trans-Golgi network. In terms of biological role, the heterodimer glycoprotein H-glycoprotein L is required for the fusion of viral and plasma membranes leading to virus entry into the host cell. Acts as a functional inhibitor of gH and maintains gH in an inhibited form. Upon binding to host integrins, gL dissociates from gH leading to activation of the viral fusion glycoproteins gB and gH. The chain is Envelope glycoprotein L from Equus caballus (Horse).